We begin with the raw amino-acid sequence, 282 residues long: Elongation factor Ts (282 aa).

The involved in Mg(2+) ion dislocation from EF-Tu stretch occupies residues 80–83 (TDFV).

Belongs to the EF-Ts family.

It localises to the cytoplasm. Its function is as follows. Associates with the EF-Tu.GDP complex and induces the exchange of GDP to GTP. It remains bound to the aminoacyl-tRNA.EF-Tu.GTP complex up to the GTP hydrolysis stage on the ribosome. This Chlamydia trachomatis serovar A (strain ATCC VR-571B / DSM 19440 / HAR-13) protein is Elongation factor Ts.